The primary structure comprises 48 residues: uncharacterized protein (48 aa).

The disordered stretch occupies residues 1–48 (MLFCNNNNNNNNNNNNNNNNNNNNNNNNNNNNNNNNNNNSSNNNNFSR).

This is an uncharacterized protein from Dictyostelium discoideum (Social amoeba).